The primary structure comprises 26 residues: Ribulose bisphosphate carboxylase large chain (26 aa).

Positions 1–2 (MS) are excised as a propeptide. Proline 3 is subject to N-acetylproline.

The protein belongs to the RuBisCO large chain family. Type I subfamily. Heterohexadecamer of 8 large chains and 8 small chains.

It is found in the plastid. It localises to the chloroplast. It catalyses the reaction 2 (2R)-3-phosphoglycerate + 2 H(+) = D-ribulose 1,5-bisphosphate + CO2 + H2O. The enzyme catalyses D-ribulose 1,5-bisphosphate + O2 = 2-phosphoglycolate + (2R)-3-phosphoglycerate + 2 H(+). Functionally, ruBisCO catalyzes two reactions: the carboxylation of D-ribulose 1,5-bisphosphate, the primary event in carbon dioxide fixation, as well as the oxidative fragmentation of the pentose substrate in the photorespiration process. Both reactions occur simultaneously and in competition at the same active site. In Vicia faba (Broad bean), this protein is Ribulose bisphosphate carboxylase large chain (rbcL).